The following is a 254-amino-acid chain: Low affinity immunoglobulin gamma Fc region receptor III-A (254 aa).

The signal sequence occupies residues Met-1–Ala-20. Ig-like C2-type domains are found at residues Pro-24 to His-105 and Gly-107 to Thr-189. Intrachain disulfides connect Cys-47/Cys-89 and Cys-128/Cys-172. An N-linked (GlcNAc...) asparagine glycan is attached at Asn-187. The helical transmembrane segment at Tyr-207 to Val-229 threads the bilayer. Positions Pro-234–Lys-254 are disordered. Residues Asp-239–Lys-254 are compositionally biased toward basic and acidic residues.

Forms a heterooligomeric complex with ITAM-containing signaling subunits, either a homodimer of CD247, a homodimer of FCER1G or a heterodimer of CD247 and FCER1G, to form a functional receptor complex. Interacts (via transmembrane domain) with signaling subunits; this interaction is a prerequisite for receptor complex expression on the cell surface and intracellular signal transduction. Binds the Fc region of antigen-complexed IgG with a preference for IgG1 and IgG3 isotypes. Interacts with CD2; this interaction is involved in NK cell activation and cytotoxicity. Interacts with S100A4; this interaction inhibits PKC-dependent phosphorylation of FCGR3A. Glycosylated. Glycosylation plays an inhibitory role in the interaction with IgG1 and IgG2. Post-translationally, undergoes rapid ectodomain shedding upon NK cell stimulation. The soluble form is produced by a proteolytic cleavage mediated by ADAM17. Repeated stimulation causes receptor shedding, a mechanism that allows for increased NK cell motility and detachment from opsonized target cells while avoiding activation-induced NK cell apoptosis. As to expression, lymphocytes and monocytes.

It is found in the cell membrane. The protein localises to the secreted. In terms of biological role, receptor for the invariable Fc fragment of immunoglobulin gamma (IgG). Optimally activated upon binding of clustered antigen-IgG complexes displayed on cell surfaces, triggers lysis of antibody-coated cells, a process known as antibody-dependent cellular cytotoxicity (ADCC). Does not bind free monomeric IgG, thus avoiding inappropriate effector cell activation in the absence of antigenic trigger. Mediates IgG effector functions on natural killer (NK) cells. Binds antigen-IgG complexes generated upon infection and triggers NK cell-dependent cytokine production and degranulation to limit viral load and propagation. Involved in the generation of memory-like adaptive NK cells capable to produce high amounts of IFNG and to efficiently eliminate virus-infected cells via ADCC. Regulates NK cell survival and proliferation, in particular by preventing NK cell progenitor apoptosis. Fc-binding subunit that associates with CD247 and/or FCER1G adapters to form functional signaling complexes. Following the engagement of antigen-IgG complexes, triggers phosphorylation of immunoreceptor tyrosine-based activation motif (ITAM)-containing adapters with subsequent activation of phosphatidylinositol 3-kinase signaling and sustained elevation of intracellular calcium that ultimately drive NK cell activation. The ITAM-dependent signaling coupled to receptor phosphorylation by PKC mediates robust intracellular calcium flux that leads to production of pro-inflammatory cytokines, whereas in the absence of receptor phosphorylation it mainly activates phosphatidylinositol 3-kinase signaling leading to cell degranulation. Costimulates NK cells and trigger lysis of target cells independently of IgG binding. Mediates the antitumor activities of therapeutic antibodies. Upon ligation on monocytes triggers TNFA-dependent ADCC of IgG-coated tumor cells. Mediates enhanced ADCC in response to afucosylated IgGs. The sequence is that of Low affinity immunoglobulin gamma Fc region receptor III-A (FCGR3A) from Papio anubis (Olive baboon).